The sequence spans 376 residues: Lipid-A-disaccharide synthase (376 aa).

This sequence belongs to the LpxB family.

It carries out the reaction a lipid X + a UDP-2-N,3-O-bis[(3R)-3-hydroxyacyl]-alpha-D-glucosamine = a lipid A disaccharide + UDP + H(+). It functions in the pathway bacterial outer membrane biogenesis; LPS lipid A biosynthesis. Its function is as follows. Condensation of UDP-2,3-diacylglucosamine and 2,3-diacylglucosamine-1-phosphate to form lipid A disaccharide, a precursor of lipid A, a phosphorylated glycolipid that anchors the lipopolysaccharide to the outer membrane of the cell. This chain is Lipid-A-disaccharide synthase, found in Coxiella burnetii (strain CbuK_Q154) (Coxiella burnetii (strain Q154)).